We begin with the raw amino-acid sequence, 551 residues long: Solute carrier family 22 member 3 (551 aa).

A helical membrane pass occupies residues 21–41; sequence VFLLLCLTGVTFAFLFVGVVF. Asparagine 72, asparagine 99, and asparagine 114 each carry an N-linked (GlcNAc...) asparagine glycan. A helical membrane pass occupies residues 177-197; the sequence is LIIYLISCFGVGITGVVVAFA. The N-linked (GlcNAc...) asparagine glycan is linked to asparagine 199. 2 helical membrane passes run 236–256 and 264–284; these read IVGIVIQMFFTLGIIILPGIA and GIQLAISLPSFLFLLYYWVVP. Residues 284–288 carry the Proline-rich sequence motif; it reads PESPR. Asparagine 317 is a glycosylation site (N-linked (GlcNAc...) asparagine). Transmembrane regions (helical) follow at residues 376–396, 464–484, and 493–513; these read IDFFISGLVELPGALLILLTI, GVSLCSGLCDFGGIIAPFLLF, and LPLIIFGILASVCGGLVMLLP.

Belongs to the major facilitator (TC 2.A.1) superfamily. Organic cation transporter (TC 2.A.1.19) family. As to expression, highly expressed in placenta. Highly expressed in kidney cortex. In kidney, expressed specifically in the proximal and distal convoluted tubules and within Bowman capsule. Expressed in brain, particularly in dopaminergic neurons of the substantia nigra compacta, non-aminergic neurons of the ventral tegmental area, substantia nigra reticulata, locus coeruleus, hippocampus and cortex. In brain, also detected in astrocytes in the substantia nigra reticulata, several hypothalamic nuclei and nigrostriatal region. Expressed in neurons and glial cells of amygdala.

It localises to the cell membrane. The protein localises to the apical cell membrane. The protein resides in the basolateral cell membrane. Its subcellular location is the mitochondrion membrane. It is found in the endomembrane system. It localises to the nucleus membrane. The protein localises to the nucleus outer membrane. The catalysed reaction is (R)-noradrenaline(out) = (R)-noradrenaline(in). It carries out the reaction (R)-adrenaline(out) = (R)-adrenaline(in). The enzyme catalyses serotonin(out) = serotonin(in). It catalyses the reaction dopamine(out) = dopamine(in). The catalysed reaction is histamine(out) = histamine(in). It carries out the reaction tyramine(in) = tyramine(out). The enzyme catalyses guanidine(out) = guanidine(in). It catalyses the reaction agmatine(out) = agmatine(in). The catalysed reaction is spermidine(in) = spermidine(out). It carries out the reaction L-histidyl-L-proline diketopiperazine(in) = L-histidyl-L-proline diketopiperazine(out). The enzyme catalyses (R)-salsolinol(in) = (R)-salsolinol(out). In terms of biological role, electrogenic voltage-dependent transporter that mediates the transport of a variety of organic cations such as endogenous bioactive amines, cationic drugs and xenobiotics. Cation cellular uptake or release is driven by the electrochemical potential, i.e. membrane potential and concentration gradient. Functions as a Na(+)- and Cl(-)-independent, bidirectional uniporter. Implicated in monoamine neurotransmitters uptake such as dopamine, adrenaline/epinephrine, noradrenaline/norepinephrine, homovanillic acid, histamine, serotonin and tyramine, thereby supporting a role in homeostatic regulation of aminergic neurotransmission in the brain. Transports dopaminergic neuromodulators cyclo(his-pro) and salsolinol with low efficiency. May be involved in the uptake and disposition of cationic compounds by renal clearance from the blood flow. May contribute to regulate the transport of cationic compounds in testis across the blood-testis-barrier. Mediates the transport of polyamine spermidine and putrescine. Mediates the bidirectional transport of polyamine agmatine. Also transports guanidine. May also mediate intracellular transport of organic cations, thereby playing a role in amine metabolism and intracellular signaling. This chain is Solute carrier family 22 member 3, found in Mus musculus (Mouse).